The chain runs to 498 residues: uncharacterized protein (498 aa).

Disordered stretches follow at residues 1 to 48 (MSND…ARPK), 99 to 134 (NDLH…GNSK), and 190 to 209 (NSEN…TSSN). Residues 35–44 (ELSTPKQVNQ) are compositionally biased toward polar residues. A compositionally biased stretch (basic and acidic residues) spans 99–110 (NDLHPLDNDSTR). The span at 111–126 (TSKTLKNSSEVLTASK) shows a compositional bias: polar residues.

This is an uncharacterized protein from Schizosaccharomyces pombe (strain 972 / ATCC 24843) (Fission yeast).